Here is a 321-residue protein sequence, read N- to C-terminus: Ribosomal RNA small subunit methyltransferase H (321 aa).

Residues 33 to 35 (AGH), Asp58, Phe85, Asp111, and Gln118 contribute to the S-adenosyl-L-methionine site.

This sequence belongs to the methyltransferase superfamily. RsmH family.

The protein localises to the cytoplasm. The catalysed reaction is cytidine(1402) in 16S rRNA + S-adenosyl-L-methionine = N(4)-methylcytidine(1402) in 16S rRNA + S-adenosyl-L-homocysteine + H(+). Specifically methylates the N4 position of cytidine in position 1402 (C1402) of 16S rRNA. In Chloroherpeton thalassium (strain ATCC 35110 / GB-78), this protein is Ribosomal RNA small subunit methyltransferase H.